The chain runs to 255 residues: tRNA pseudouridine synthase A (255 aa).

Asp52 (nucleophile) is an active-site residue. Tyr111 contacts substrate.

Belongs to the tRNA pseudouridine synthase TruA family. As to quaternary structure, homodimer.

It catalyses the reaction uridine(38/39/40) in tRNA = pseudouridine(38/39/40) in tRNA. Its function is as follows. Formation of pseudouridine at positions 38, 39 and 40 in the anticodon stem and loop of transfer RNAs. The chain is tRNA pseudouridine synthase A from Cereibacter sphaeroides (strain ATCC 17023 / DSM 158 / JCM 6121 / CCUG 31486 / LMG 2827 / NBRC 12203 / NCIMB 8253 / ATH 2.4.1.) (Rhodobacter sphaeroides).